A 262-amino-acid polypeptide reads, in one-letter code: Sperm microtubule inner protein 6 (262 aa).

Belongs to the SPMIP6 family. As to quaternary structure, microtubule inner protein component of sperm flagellar doublet microtubules. Interacts with alpha-tubulin. In terms of tissue distribution, expressed in testis. Strongly expressed in ciliated epithelial cells with lower levels in goblet cells (at protein level).

It is found in the cytoplasm. The protein localises to the cytoskeleton. Its subcellular location is the nucleus. It localises to the mitochondrion. The protein resides in the flagellum axoneme. In terms of biological role, may participate in intramanchette transport and midpiece formation of the sperm tail. May play a potential role in somatic cell proliferation. This Homo sapiens (Human) protein is Sperm microtubule inner protein 6.